Consider the following 388-residue polypeptide: Pepsin F (388 aa).

The N-terminal stretch at 1–15 is a signal peptide; it reads MKWLGLLGLVALSEC. A propeptide spans 16–58 (activation peptide); it reads LVTIPLMKVKSMRENLRENDILLDYLEKHPYRPTYKLLSGQQD. Residues 74–385 form the Peptidase A1 domain; the sequence is YIGIISIGTP…DRANNRIGLA (312 aa). Residue Asp92 is part of the active site. Intrachain disulfides connect Cys105/Cys110 and Cys266/Cys270. Residue Asp275 is part of the active site. Cysteines 309 and 343 form a disulfide.

Belongs to the peptidase A1 family.

The protein resides in the secreted. It carries out the reaction Preferential cleavage: hydrophobic, preferably aromatic, residues in P1 and P1' positions. Cleaves 1-Phe-|-Val-2, 4-Gln-|-His-5, 13-Glu-|-Ala-14, 14-Ala-|-Leu-15, 15-Leu-|-Tyr-16, 16-Tyr-|-Leu-17, 23-Gly-|-Phe-24, 24-Phe-|-Phe-25 and 25-Phe-|-Tyr-26 bonds in the B chain of insulin.. In terms of biological role, shows particularly broad specificity; although bonds involving phenylalanine and leucine are preferred, many others are also cleaved to some extent. The protein is Pepsin F of Oryctolagus cuniculus (Rabbit).